We begin with the raw amino-acid sequence, 34 residues long: Photosystem I reaction center subunit XII (34 aa).

The chain crosses the membrane as a helical span at residues 10–32 (IFIALVVAAHAGVLAVRLCVSLY).

This sequence belongs to the PsaM family.

The protein resides in the cellular thylakoid membrane. The protein is Photosystem I reaction center subunit XII of Synechococcus sp. (strain WH7803).